Reading from the N-terminus, the 209-residue chain is Probable chalcone--flavanone isomerase 3 (209 aa).

This sequence belongs to the chalcone isomerase family.

The catalysed reaction is a chalcone = a flavanone.. It functions in the pathway secondary metabolite biosynthesis; flavonoid biosynthesis. In terms of biological role, involved in anthocyanin biosynthesis. This chain is Probable chalcone--flavanone isomerase 3 (CHI3), found in Arabidopsis thaliana (Mouse-ear cress).